Consider the following 140-residue polypeptide: Nucleoside diphosphate kinase (140 aa).

Lys-11, Phe-59, Arg-87, Thr-93, Arg-104, and Asn-114 together coordinate ATP. His-117 (pros-phosphohistidine intermediate) is an active-site residue.

The protein belongs to the NDK family. Homotetramer. Mg(2+) serves as cofactor.

It is found in the cytoplasm. It carries out the reaction a 2'-deoxyribonucleoside 5'-diphosphate + ATP = a 2'-deoxyribonucleoside 5'-triphosphate + ADP. It catalyses the reaction a ribonucleoside 5'-diphosphate + ATP = a ribonucleoside 5'-triphosphate + ADP. In terms of biological role, major role in the synthesis of nucleoside triphosphates other than ATP. The ATP gamma phosphate is transferred to the NDP beta phosphate via a ping-pong mechanism, using a phosphorylated active-site intermediate. The sequence is that of Nucleoside diphosphate kinase from Sinorhizobium fredii (strain NBRC 101917 / NGR234).